Here is a 171-residue protein sequence, read N- to C-terminus: Dual specificity protein phosphatase OPG106 (171 aa).

This sequence belongs to the protein-tyrosine phosphatase family. Non-receptor class dual specificity subfamily. Homodimer.

Its subcellular location is the virion. The protein localises to the host cytoplasm. The catalysed reaction is O-phospho-L-tyrosyl-[protein] + H2O = L-tyrosyl-[protein] + phosphate. It carries out the reaction O-phospho-L-seryl-[protein] + H2O = L-seryl-[protein] + phosphate. In terms of biological role, serine/tyrosine phosphatase which down-regulates cellular antiviral response by dephosphorylating activated host STAT1 and blocking interferon (IFN)-stimulated innate immune responses. Dephosphorylates the OPG144 protein. The sequence is that of Dual specificity protein phosphatase OPG106 (OPG106) from Monkeypox virus.